The primary structure comprises 298 residues: Lipoyl synthase (298 aa).

The [4Fe-4S] cluster site is built by C43, C48, C54, C69, C73, C76, and S280. A Radical SAM core domain is found at 55–269 (FSSGTATFLI…AACGRGMGIP (215 aa)).

Belongs to the radical SAM superfamily. Lipoyl synthase family. [4Fe-4S] cluster serves as cofactor.

The protein localises to the cytoplasm. The enzyme catalyses [[Fe-S] cluster scaffold protein carrying a second [4Fe-4S](2+) cluster] + N(6)-octanoyl-L-lysyl-[protein] + 2 oxidized [2Fe-2S]-[ferredoxin] + 2 S-adenosyl-L-methionine + 4 H(+) = [[Fe-S] cluster scaffold protein] + N(6)-[(R)-dihydrolipoyl]-L-lysyl-[protein] + 4 Fe(3+) + 2 hydrogen sulfide + 2 5'-deoxyadenosine + 2 L-methionine + 2 reduced [2Fe-2S]-[ferredoxin]. It functions in the pathway protein modification; protein lipoylation via endogenous pathway; protein N(6)-(lipoyl)lysine from octanoyl-[acyl-carrier-protein]: step 2/2. Functionally, catalyzes the radical-mediated insertion of two sulfur atoms into the C-6 and C-8 positions of the octanoyl moiety bound to the lipoyl domains of lipoate-dependent enzymes, thereby converting the octanoylated domains into lipoylated derivatives. The sequence is that of Lipoyl synthase from Nitratidesulfovibrio vulgaris (strain ATCC 29579 / DSM 644 / CCUG 34227 / NCIMB 8303 / VKM B-1760 / Hildenborough) (Desulfovibrio vulgaris).